We begin with the raw amino-acid sequence, 278 residues long: MCCSGLAMTLRDDEHAVLADGELTVLGRIRSASNATFLCESTLGLRSLHCVYKPVSGERPLWDFPDGTLAGRELSAYLVSTQLGWNLVPHTIIRDGPAGIGMLQLWVQQPGDAVDSDPLPGPDLVDLFPAHRPRPGYLPVLRAYDYAGDEVVLMHADDIRLRRMAVFDVLINNADRKGGHILCGIDGQVYGVDHGLCLHVENKLRTVLWGWAGKPIDDQILQAVAGLADALGGPLAEALAGRIAAAEIGALRRRAQSLLDQPVMPGPNGHRPIPWPAF.

The protein is Protein Rv2133c of Mycobacterium tuberculosis (strain ATCC 25618 / H37Rv).